We begin with the raw amino-acid sequence, 182 residues long: Large ribosomal subunit protein uL6 (182 aa).

This sequence belongs to the universal ribosomal protein uL6 family. As to quaternary structure, part of the 50S ribosomal subunit.

Its function is as follows. This protein binds to the 23S rRNA, and is important in its secondary structure. It is located near the subunit interface in the base of the L7/L12 stalk, and near the tRNA binding site of the peptidyltransferase center. The sequence is that of Large ribosomal subunit protein uL6 from Methanococcus maripaludis (strain C5 / ATCC BAA-1333).